Reading from the N-terminus, the 120-residue chain is Large ribosomal subunit protein bL20 (120 aa).

The protein belongs to the bacterial ribosomal protein bL20 family.

Binds directly to 23S ribosomal RNA and is necessary for the in vitro assembly process of the 50S ribosomal subunit. It is not involved in the protein synthesizing functions of that subunit. This chain is Large ribosomal subunit protein bL20, found in Novosphingobium aromaticivorans (strain ATCC 700278 / DSM 12444 / CCUG 56034 / CIP 105152 / NBRC 16084 / F199).